The sequence spans 373 residues: MTDNSKICVVVGMSGGVDSSVTALLLKEQGYDVIGVFMKNWHDTDEFGVCTATEDYKDVAAVADQIGIPYYSVNFEKEYWDRVFEYFLAEYRAGRTPNPDVMCNKEIKFKAFLDYAMTLGADYVATGHYAQVKRDENGTVHMLRGADNGKDQTYFLSQLSQEQLQKTLFPLGHLQKSEVREIAERAGLATAKKKDSTGICFIGEKNFKQFLSQYLPAQKGRMMTIDGRDMGEHAGLMYYTIGQRGGLGIGGQHGGDNQPWFVVGKDLSQNILYVGQGFYHEALMSNSLDASVIHFTREMPEEFTFECTAKFRYRQPDSHVRVHVRGDKAEVVFAEPQRAITPGQAVVFYDGKECLGGGMIDMAYKNGQPCQYI.

ATP-binding positions include 12–19 (GMSGGVDS) and M38. The interval 98–100 (NPD) is interaction with target base in tRNA. C103 acts as the Nucleophile in catalysis. An intrachain disulfide couples C103 to C200. G127 lines the ATP pocket. Residues 150 to 152 (KDQ) are interaction with tRNA. Residue C200 is the Cysteine persulfide intermediate of the active site. An interaction with tRNA region spans residues 312–313 (RY).

It belongs to the MnmA/TRMU family.

The protein resides in the cytoplasm. The catalysed reaction is S-sulfanyl-L-cysteinyl-[protein] + uridine(34) in tRNA + AH2 + ATP = 2-thiouridine(34) in tRNA + L-cysteinyl-[protein] + A + AMP + diphosphate + H(+). Functionally, catalyzes the 2-thiolation of uridine at the wobble position (U34) of tRNA, leading to the formation of s(2)U34. The polypeptide is tRNA-specific 2-thiouridylase MnmA (Streptococcus pyogenes serotype M3 (strain SSI-1)).